A 308-amino-acid chain; its full sequence is Porphobilinogen deaminase (308 aa).

Cys241 is subject to S-(dipyrrolylmethanemethyl)cysteine.

The protein belongs to the HMBS family. Monomer. Dipyrromethane is required as a cofactor.

It catalyses the reaction 4 porphobilinogen + H2O = hydroxymethylbilane + 4 NH4(+). It participates in porphyrin-containing compound metabolism; protoporphyrin-IX biosynthesis; coproporphyrinogen-III from 5-aminolevulinate: step 2/4. Tetrapolymerization of the monopyrrole PBG into the hydroxymethylbilane pre-uroporphyrinogen in several discrete steps. This Exiguobacterium sibiricum (strain DSM 17290 / CCUG 55495 / CIP 109462 / JCM 13490 / 255-15) protein is Porphobilinogen deaminase.